The following is a 117-amino-acid chain: LYR motif-containing protein 1 (117 aa).

This sequence belongs to the complex I LYR family.

This is LYR motif-containing protein 1 (lyrm1) from Dictyostelium discoideum (Social amoeba).